We begin with the raw amino-acid sequence, 63 residues long: Large ribosomal subunit protein bL28 (63 aa).

This sequence belongs to the bacterial ribosomal protein bL28 family.

The chain is Large ribosomal subunit protein bL28 from Treponema denticola (strain ATCC 35405 / DSM 14222 / CIP 103919 / JCM 8153 / KCTC 15104).